Consider the following 391-residue polypeptide: Choline/ethanolaminephosphotransferase 1 (391 aa).

The Lumenal portion of the chain corresponds to 1 to 49; the sequence is MGYFVPDSHIENLKSYKYQSEDRSLVSKYFLKPFWQRFCHIFPTWMAPN. Residues 50–69 traverse the membrane as a helical segment; the sequence is IITLSGFAFIVINVLTVFYY. The Cytoplasmic portion of the chain corresponds to 70–172; that stretch reads DPNLNTDTPR…YHTHTLYLSE (103 aa). Residues 173–193 traverse the membrane as a helical segment; that stretch reads FSGPVEGILIVCVSLILTGIY. The Lumenal segment spans residues 194-211; sequence GKQVIWHTYLFTITVGDK. A helical membrane pass occupies residues 212-232; it reads VIDVDTLDIVFSLAVFGLVMN. Over 233-264 the chain is Cytoplasmic; the sequence is ALSAKRNVDKYYRNSTSSANNITQIEQDSAIK. Residues 265–282 form a helical membrane-spanning segment; the sequence is GLLPFFAYYASIALLVWM. At 283–285 the chain is on the lumenal side; that stretch reads QPS. Residues 286–308 form a helical membrane-spanning segment; sequence FITLSFILSVGFTGAFTVGRIIV. The Cytoplasmic segment spans residues 309 to 321; the sequence is CHLTKQSFPMFNA. A helical transmembrane segment spans residues 322–342; it reads PMLIPLCQIVLYKICLSLWGI. Residues 343–346 lie on the Lumenal side of the membrane; it reads ESNK. A helical membrane pass occupies residues 347-367; that stretch reads IVFALSWLGFGLSLGVHIMFM. At 368–391 the chain is on the cytoplasmic side; that stretch reads NDIIHEFTEYLDVYALSIKRSKLT.

This sequence belongs to the CDP-alcohol phosphatidyltransferase class-I family. Requires Mg(2+) as cofactor.

It localises to the golgi apparatus membrane. It carries out the reaction CDP-ethanolamine + a 1,2-diacyl-sn-glycerol = a 1,2-diacyl-sn-glycero-3-phosphoethanolamine + CMP + H(+). It catalyses the reaction CDP-choline + a 1,2-diacyl-sn-glycerol = a 1,2-diacyl-sn-glycero-3-phosphocholine + CMP + H(+). The catalysed reaction is CDP-N-methylethanolamine + a 1,2-diacyl-sn-glycerol = a 1,2-diacyl-sn-glycero-3-phospho-N-methylethanolamine + CMP + H(+). The enzyme catalyses CDP-N,N-dimethylethanolamine + a 1,2-diacyl-sn-glycerol = a 1,2-diacyl-sn-glycero-3-phospho-N,N-dimethylethanolamine + CMP + H(+). It carries out the reaction 1,2-di-(9Z-octadecenoyl)-glycerol + CDP-choline = 1,2-di-(9Z-octadecenoyl)-sn-glycero-3-phosphocholine + CMP + H(+). It catalyses the reaction 1,2-di-(9Z-octadecenoyl)-glycerol + CDP-ethanolamine = 1,2-di-(9Z-octadecenoyl)-sn-glycero-3-phosphoethanolamine + CMP + H(+). It functions in the pathway phospholipid metabolism; phosphatidylethanolamine biosynthesis; phosphatidylethanolamine from ethanolamine: step 3/3. The protein operates within phospholipid metabolism; phosphatidylcholine biosynthesis; phosphatidylcholine from phosphocholine: step 2/2. Requires a divalent cation activator, and is inhibited by CMP. Activated by phospholipids, especially phosphatidylcholine. Catalyzes the final step in the CDP-ethanolamine route leading to phosphatidylethanolamine (PE). Can also catalyze the formation of phosphatidylcholine (PC) from CDP-choline, but does not substantially contribute to PC biosynthesis. Preferentially uses CDP-dimethylethanolamine and CDP-propanolamine as aminoalcohol substrates. Shows highest activity toward di-unsaturated diacylglycerol species as lipid substrates. The CDP-ethanolamine pathway may play a role in maintaining the proper PE species distribution. This Saccharomyces cerevisiae (strain ATCC 204508 / S288c) (Baker's yeast) protein is Choline/ethanolaminephosphotransferase 1 (EPT1).